The sequence spans 2116 residues: MEKLLDEVLAPGGPYNLTVGSWVRDHVRSIVEGAWEVRDVVSAAQKRAIVAVIPRPVFTQMQVSDHPALHAISRYTRRHWIEWGPKEALHVLIDPSPGLLREVARVERRWVALCLHRTARKLATALAETASEAWHADYVCALRGAPSGPFYVHPEDVPHGGRAVADRCLLYYTPMQMCELMRTIDATLLVAVDLWPVALAAHVGDDWDDLGIAWHLDHDGGCPADCRGAGAGPTPGYTRPCTTRIYQVLPDTAHPGRLYRCGPRLWTRDCAVAELSWEVAQHCGHQARVRAVRCTLPIRHVRSLQPSARVRLPDLVHLAEVGRWRWFSLPRPVFQRMLSYCKTLSPDAYYSERVFKFKNALSHSITLAGNVLQEGWKGTCAEEDALCAYVAFRAWQSNARLAGIMKSAKRCAADSLSVAGWLDTIWDAIKRFFGSVPLAERMEEWEQDAAVAAFDRGPLEDGGRHLDTVQPPKSPPRPEIAATWIVHAASADRHCACAPRCDVPRERPSAPACPPDDEALIPPWLFAERRALRCREWDFEALRARADTAAAPAPLAPRPARYPTVLYRHPAHHGPWLTLDEPGEADAALVLCDPLGQPLRGPERHFAAGAHMCAQARGLQAFVRVVPPPERPWADGGARAWAKFFRGCAWAQRLLGEPAVMHLPYTDGDVPKLIALALRTLAQQGAALALSVRDLPGGAAFDANAVTAAVRAGPGQFAATSPPPGDPPPPRRARRSQRHSDARGTPPPAPARDPPPPAPSPPAPPRAGDPDSPTSAEPADRARHAELEVVYEPSGPPTSTKADPDSDIVESYARAAGPVHLRVRDIMDPPPGCKVVVNAANEGLLAGSGVCGAIFANATAALAADCRRLAPCPTGEAVATPGHGCGYTHIIHAVAPRRPRDPAALEEGEALLERAYRSIVALAAARRWACVACPLLGAGVYGWSAAESLRAALAATRTEPAERVSLHICHPDRATLTHASVLVGAGLAARRVSPPPTEPLASCPAGDLGRPAQRSASPPATPLGDATAPEPRGCQGCELCRCTRVTNDRAYVNLWLERDRGATSWAMRIPEVVVYGPEHLATHFPLNHYSVLKPAEVRPPRGMCGSDMWRCRGWQGMPQVRCTPSNAHAALCRTGVPPRVSTRGGELDPNTCWLRAAANVAQAARACGAYTSAGCPKCAYGRALSEARTHEDFAALSQRWSASHADASPDGTGDPLDPLMETVGCACSRVWVGTEHEAPPDHLLVSLHRAPNGPWGVVLEVRARPEGGNPTGHFVCAVGGGPRRVSDRPHLWLAVPLSRGGGTCAATDEGLAQAYYDDLEVRRLGDDAMARAALASVQRPRKGPYNIRVWNMAAGAGKTTRILAAFTREDLYVCPTNALLHEIQAKLRARDIDIKNAATYERALTKPLAAYRRIYIDEAFTLGGEYCAFVASQTTAEVICVGDRDQCGPHYANNCRTPVPDRWPTERSRHTWRFPDCWAARLRAGLDYDIEGERTGTFACNLWDGRQVDLHLAFSRETVRRLHEAGIRAYTVREAQGMSVGTACIHVGRDGTDVALALTRDLAIVSLTRASDALYLHELEDGSLRAAGLSAFLDAGALAELKEVPAGIDRVVAVEQAPPPLPPADGIPEAQDVPPFCPRTLEELVFGRAGHPHYADLNRVTEGEREVRYMRISRHLLNKNHTEMPGTERVLSAVCAVRRYRAGEDGSTLRTAVARQHPRPFRQIPPPRVTAGVAQEWRMTYLRERIDLTDVYTQMGVAARELTDRYARRYPEIFAGMCTAQSLSVPAFLKATLKCVDAALGPRDTEDCHAAQGKAGLEIRAWAKEWVQVMSPHFRAIQKIIMRALRPQFLVAAGHTEPEVDAWWQAHYTTNAIEVDFTEFDMNQTLATRDVELEISAALLGLPCAEDYRALRAGSYCTLRELGSTETGCERTSGEPATLLHNTTVAMCMAMRMVPKGVRWAGIFQGDDMVIFLPEGARSAALKWTPAEVGLFGFHIPVKHVSTPTPSFCGHVGTAAGLFHDVMHQAIKVLCRRFDPDVLEEQQVALLDRLRGVYAALPDTVAANAAYYDYSAERVLAIVRELTAYARGRGLDHPATIGALEEIQTPYARANLHDAD.

The interval 36 to 49 (EVRDVVSAAQKRAI) is required for efficient proteolysis and P150-P90 interaction. In terms of domain architecture, Alphavirus-like MT spans 57–247 (VFTQMQVSDH…TRPCTTRIYQ (191 aa)). The segment at 715 to 781 (GQFAATSPPP…SPTSAEPADR (67 aa)) is disordered. Composition is skewed to pro residues over residues 721–730 (SPPPGDPPPP) and 745–767 (TPPP…PPRA). 3 short sequence motifs (pxxPxR; class II SH3-binding) span residues 727-732 (PPPPRR), 747-752 (PPAPAR), and 761-766 (PPAPPR). Residues 806–985 (SDIVESYARA…LTHASVLVGA (180 aa)) enclose the Macro domain. The segment at 991–1030 (RVSPPPTEPLASCPAGDLGRPAQRSASPPATPLGDATAPE) is disordered. Residues 1000–1301 (LASCPAGDLG…WLAVPLSRGG (302 aa)) form the Peptidase C27 domain. The active-site For cysteine protease activity is Cys1152. The interaction with host CALM1 stretch occupies residues 1152–1183 (CWLRAAANVAQAARACGAYTSAGCPKCAYGRA). Residues Cys1175, Cys1178, Cys1227, and His1273 each coordinate Zn(2+). The interval 1193 to 1228 (FAALSQRWSASHADASPDGTGDPLDPLMETVGCACS) is EF-hand-like. The active-site For cysteine protease activity is the His1273. The (+)RNA virus helicase ATP-binding domain maps to 1320–1468 (EVRRLGDDAM…VPDRWPTERS (149 aa)). 1352–1359 (MAAGAGKT) contributes to the a ribonucleoside 5'-triphosphate binding site. The region spanning 1469–1609 (RHTWRFPDCW…ELKEVPAGID (141 aa)) is the (+)RNA virus helicase C-terminal domain. Residues 1700–1900 (YRAGEDGSTL…VELEISAALL (201 aa)) form an involved in P150-P90 interaction region. Positions 1870 to 1981 (TNAIEVDFTE…FLPEGARSAA (112 aa)) constitute a RdRp catalytic domain. A Human RB1 binding motif is present at residues 1902-1906 (LPCAE).

In terms of assembly, interacts with RNA-directed RNA polymerase p90. Interacts with host CALM1; this interaction is necessary for the protease activity and viral infectivity. Interacts with host C1QBP. Interacts with the capsid protein. As to quaternary structure, interacts with human RB1/retinoblastoma protein. Interacts with protease/methyltransferase p150. It depends on Zn(2+) as a cofactor. In terms of processing, specific enzymatic cleavage by its own cysteine protease yield mature proteins p150 and p90.

The protein resides in the host membrane. The protein localises to the host cytoplasm. It localises to the host perinuclear region. It carries out the reaction RNA(n) + a ribonucleoside 5'-triphosphate = RNA(n+1) + diphosphate. It catalyses the reaction a ribonucleoside 5'-triphosphate + H2O = a ribonucleoside 5'-diphosphate + phosphate + H(+). The enzyme catalyses ATP + H2O = ADP + phosphate + H(+). In terms of biological role, probable principal replicase for the negative-strand DNA, which replicates the 40S (+) genomic RNA into (-) antigenomic RNA. It cannot replicate the (-) into (+) until cleaved into p150 and p90 mature proteins. Functionally, protease that cleaves the precursor polyprotein into two mature products. Together with RNA-directed RNA polymerase p90, replicates the 40S genomic and antigenomic RNA by recognizing replications specific signals. The heterodimer P150/p90 is probably the principal replicase for positive-strand genomic RNA and the 24S subgenomic RNA, which codes for structural proteins. Responsible for the mRNA-capping of the viral mRNAs. This function is necessary since all viral RNAs are synthesized in the cytoplasm, and host capping enzymes are restricted to the nucleus. Forms fibers late in the infection that may be involved in cell-to-cell spread of the virus RNA in the absence of virus particle formation. Its function is as follows. Together with protease/methyltransferase p150, replicates the 40S genomic and antigenomic RNA by recognizing replications specific signals. The heterodimer P150/p90 is probably the principal replicase for positive-strand genomic RNA and the 24S subgenomic RNA, which codes for structural proteins. A helicase activity is probably also present. This Homo sapiens (Human) protein is Non-structural polyprotein p200.